Reading from the N-terminus, the 160-residue chain is MRCPYCQCEDTQVKDSRPAEEGAVIRRRRVCSVCGGRFTTFERVQLRELLVLKKSGRRELFNRDKLMKSVDLAMRKRNIDPDRIERAISGIVRRLESLGEPEIASEKIGYLVMESLKRIDDIAYIRFASVYRDFRNASDFHDIIDELSKDVADIESCFDE.

The segment at 3–34 is a zinc-finger region; it reads CPYCQCEDTQVKDSRPAEEGAVIRRRRVCSVC. The 91-residue stretch at 49–139 folds into the ATP-cone domain; that stretch reads LLVLKKSGRR…VYRDFRNASD (91 aa).

This sequence belongs to the NrdR family. Zn(2+) serves as cofactor.

Its function is as follows. Negatively regulates transcription of bacterial ribonucleotide reductase nrd genes and operons by binding to NrdR-boxes. The chain is Transcriptional repressor NrdR from Bartonella bacilliformis (strain ATCC 35685 / KC583 / Herrer 020/F12,63).